The following is a 540-amino-acid chain: L-aspartate oxidase (540 aa).

Residues 16-19 (SGAA), Lys38, 45-52 (STFYAQGG), and Asp223 each bind FAD. Arg290 (proton donor/acceptor) is an active-site residue. FAD is bound by residues Glu375 and 391–392 (SL).

It belongs to the FAD-dependent oxidoreductase 2 family. NadB subfamily. FAD serves as cofactor.

It localises to the cytoplasm. The catalysed reaction is L-aspartate + O2 = iminosuccinate + H2O2. Its pathway is cofactor biosynthesis; NAD(+) biosynthesis; iminoaspartate from L-aspartate (oxidase route): step 1/1. In terms of biological role, catalyzes the oxidation of L-aspartate to iminoaspartate, the first step in the de novo biosynthesis of NAD(+). The polypeptide is L-aspartate oxidase (nadB) (Salmonella typhimurium (strain LT2 / SGSC1412 / ATCC 700720)).